A 493-amino-acid polypeptide reads, in one-letter code: Glutamyl-tRNA(Gln) amidotransferase subunit A (493 aa).

Active-site charge relay system residues include K79 and S159. S183 functions as the Acyl-ester intermediate in the catalytic mechanism.

The protein belongs to the amidase family. GatA subfamily. Heterotrimer of A, B and C subunits.

It catalyses the reaction L-glutamyl-tRNA(Gln) + L-glutamine + ATP + H2O = L-glutaminyl-tRNA(Gln) + L-glutamate + ADP + phosphate + H(+). Its function is as follows. Allows the formation of correctly charged Gln-tRNA(Gln) through the transamidation of misacylated Glu-tRNA(Gln) in organisms which lack glutaminyl-tRNA synthetase. The reaction takes place in the presence of glutamine and ATP through an activated gamma-phospho-Glu-tRNA(Gln). The polypeptide is Glutamyl-tRNA(Gln) amidotransferase subunit A (Allorhizobium ampelinum (strain ATCC BAA-846 / DSM 112012 / S4) (Agrobacterium vitis (strain S4))).